The following is a 465-amino-acid chain: Putative apoptosis inhibitor ORF106 (465 aa).

Residues 291–357 form a BIR repeat; that stretch reads RECSFSTWPK…MEKETCGWLE (67 aa). Residues 373-382 show a composition bias toward acidic residues; the sequence is EGGEDKEEDG. The segment at 373–393 is disordered; sequence EGGEDKEEDGGGGGVIEFPKN. Residues 405–447 form an RING-type zinc finger; that stretch reads CKACYERKADIAFIPCGHVFSCNICTMEMFASYKKKKRCPMCR.

This Magallana gigas (Pacific oyster) protein is Putative apoptosis inhibitor ORF106.